Reading from the N-terminus, the 312-residue chain is Olfactory receptor 2L13 (312 aa).

The Extracellular portion of the chain corresponds to 1–24 (MEKWNHTSNDFILLGLLPPNQTGI). Residues Asn-5 and Asn-20 are each glycosylated (N-linked (GlcNAc...) asparagine). The helical transmembrane segment at 25 to 48 (FLLCLIILIFFLASVGNSAMIHLI) threads the bilayer. At 49-56 (HVDPRLHT) the chain is on the cytoplasmic side. Residues 57-78 (PMYFLLSQLSLMDLMYISTTVP) form a helical membrane-spanning segment. The Extracellular portion of the chain corresponds to 79–99 (KMAYNFLSGQKGISFLGCGVQ). Cys-96 and Cys-188 are oxidised to a cystine. The chain crosses the membrane as a helical span at residues 100-119 (SFFFLTMACSEGLLLTSMAY). The Cytoplasmic portion of the chain corresponds to 120–138 (DRYLAICHSLYYPIRMSKM). A helical membrane pass occupies residues 139–157 (MCVKMIGGSWTLGSINSLA). The Extracellular portion of the chain corresponds to 158–194 (HTVFALHIPYCRSRAIDHFFCDVPAMLLLACTDTWVY). A helical transmembrane segment spans residues 195–218 (EYMVFVSTSLFLLFPFIGITSSCG). The Cytoplasmic portion of the chain corresponds to 219–235 (RVLFAVYHMHSKEGRKK). The chain crosses the membrane as a helical span at residues 236-258 (AFTTISTHLTVVIFYYAPFVYTY). Over 259–271 (LRPRNLRSPAEDK) the chain is Extracellular. The helical transmembrane segment at 272-291 (ILAVFYTILTPMLNPIIYSL) threads the bilayer. Residues 292 to 312 (RNKEVLGAMRRVFGIFSFLKE) are Cytoplasmic-facing.

Belongs to the G-protein coupled receptor 1 family.

It localises to the cell membrane. In terms of biological role, odorant receptor. In Homo sapiens (Human), this protein is Olfactory receptor 2L13 (OR2L13).